A 139-amino-acid polypeptide reads, in one-letter code: Cell division protein SepF (139 aa).

The protein belongs to the SepF family. As to quaternary structure, homodimer. Interacts with FtsZ.

The protein localises to the cytoplasm. Its function is as follows. Cell division protein that is part of the divisome complex and is recruited early to the Z-ring. Probably stimulates Z-ring formation, perhaps through the cross-linking of FtsZ protofilaments. Its function overlaps with FtsA. The protein is Cell division protein SepF of Coprothermobacter proteolyticus (strain ATCC 35245 / DSM 5265 / OCM 4 / BT).